The chain runs to 658 residues: Threonine--tRNA ligase (658 aa).

A TGS domain is found at 1–61 (MIELVFPDGS…EKGGAFKILT (61 aa)). A catalytic region spans residues 243–535 (DHRKLGRQMD…LIENYAGAFP (293 aa)). Positions 335, 386, and 512 each coordinate Zn(2+).

It belongs to the class-II aminoacyl-tRNA synthetase family. In terms of assembly, homodimer. It depends on Zn(2+) as a cofactor.

It is found in the cytoplasm. The catalysed reaction is tRNA(Thr) + L-threonine + ATP = L-threonyl-tRNA(Thr) + AMP + diphosphate + H(+). Catalyzes the attachment of threonine to tRNA(Thr) in a two-step reaction: L-threonine is first activated by ATP to form Thr-AMP and then transferred to the acceptor end of tRNA(Thr). Also edits incorrectly charged L-seryl-tRNA(Thr). In Phenylobacterium zucineum (strain HLK1), this protein is Threonine--tRNA ligase.